We begin with the raw amino-acid sequence, 429 residues long: Ribosomal RNA small subunit methyltransferase B (429 aa).

S-adenosyl-L-methionine contacts are provided by residues 254–260 (CAAPGGK), Asp277, Asp303, and Asp322. Cys375 serves as the catalytic Nucleophile.

Belongs to the class I-like SAM-binding methyltransferase superfamily. RsmB/NOP family.

It is found in the cytoplasm. The catalysed reaction is cytidine(967) in 16S rRNA + S-adenosyl-L-methionine = 5-methylcytidine(967) in 16S rRNA + S-adenosyl-L-homocysteine + H(+). Its function is as follows. Specifically methylates the cytosine at position 967 (m5C967) of 16S rRNA. This Shigella flexneri serotype 5b (strain 8401) protein is Ribosomal RNA small subunit methyltransferase B.